The chain runs to 370 residues: tRNA N6-adenosine threonylcarbamoyltransferase (370 aa).

Residues His-122 and His-126 each coordinate Fe cation. Residues 153–157, Asp-186, Gly-199, and Asn-298 contribute to the substrate site; that span reads LLSGG. Residue Asp-326 coordinates Fe cation.

This sequence belongs to the KAE1 / TsaD family. Requires Fe(2+) as cofactor.

The protein resides in the cytoplasm. It catalyses the reaction L-threonylcarbamoyladenylate + adenosine(37) in tRNA = N(6)-L-threonylcarbamoyladenosine(37) in tRNA + AMP + H(+). Required for the formation of a threonylcarbamoyl group on adenosine at position 37 (t(6)A37) in tRNAs that read codons beginning with adenine. Is involved in the transfer of the threonylcarbamoyl moiety of threonylcarbamoyl-AMP (TC-AMP) to the N6 group of A37, together with TsaE and TsaB. TsaD likely plays a direct catalytic role in this reaction. The protein is tRNA N6-adenosine threonylcarbamoyltransferase of Granulibacter bethesdensis (strain ATCC BAA-1260 / CGDNIH1).